We begin with the raw amino-acid sequence, 313 residues long: UPF0761 membrane protein VV1_0885 (313 aa).

Helical transmembrane passes span 41–61 (YLAY…LSIL), 104–124 (MTAV…SNID), 139–159 (AVFS…LVGA), 185–205 (LLRW…YLLV), 215–235 (AVVG…GFAA), and 249–269 (ALAA…IVLI). The segment at 294–313 (PNNDTELEKDTQRDRFDSES) is disordered. The segment covering 299-313 (ELEKDTQRDRFDSES) has biased composition (basic and acidic residues).

It belongs to the UPF0761 family.

It is found in the cell inner membrane. In Vibrio vulnificus (strain CMCP6), this protein is UPF0761 membrane protein VV1_0885.